A 133-amino-acid chain; its full sequence is Holo-[acyl-carrier-protein] synthase (133 aa).

Asp-8 and Glu-57 together coordinate Mg(2+).

It belongs to the P-Pant transferase superfamily. AcpS family. It depends on Mg(2+) as a cofactor.

It is found in the cytoplasm. The enzyme catalyses apo-[ACP] + CoA = holo-[ACP] + adenosine 3',5'-bisphosphate + H(+). Functionally, transfers the 4'-phosphopantetheine moiety from coenzyme A to a Ser of acyl-carrier-protein. The polypeptide is Holo-[acyl-carrier-protein] synthase (Caulobacter sp. (strain K31)).